Reading from the N-terminus, the 440-residue chain is Chromosomal replication initiator protein DnaA (440 aa).

Positions 1 to 93 (MNVQLNEIWN…QTPVKPVAQE (93 aa)) are domain I, interacts with DnaA modulators. A domain II region spans residues 94–101 (YTEDSNMS). The domain III, AAA+ region stretch occupies residues 102–318 (FLNPKYTFDT…GALNRVIAYS (217 aa)). Residues glycine 146, glycine 148, lysine 149, and threonine 150 each coordinate ATP. Residues 319 to 440 (TLTENIINVD…EEIKKNITGG (122 aa)) are domain IV, binds dsDNA.

The protein belongs to the DnaA family. In terms of assembly, oligomerizes as a right-handed, spiral filament on DNA at oriC.

It localises to the cytoplasm. In terms of biological role, plays an essential role in the initiation and regulation of chromosomal replication. ATP-DnaA binds to the origin of replication (oriC) to initiate formation of the DNA replication initiation complex once per cell cycle. Binds the DnaA box (a 9 base pair repeat at the origin) and separates the double-stranded (ds)DNA. Forms a right-handed helical filament on oriC DNA; dsDNA binds to the exterior of the filament while single-stranded (ss)DNA is stabiized in the filament's interior. The ATP-DnaA-oriC complex binds and stabilizes one strand of the AT-rich DNA unwinding element (DUE), permitting loading of DNA polymerase. After initiation quickly degrades to an ADP-DnaA complex that is not apt for DNA replication. Binds acidic phospholipids. The protein is Chromosomal replication initiator protein DnaA of Ruminiclostridium cellulolyticum (strain ATCC 35319 / DSM 5812 / JCM 6584 / H10) (Clostridium cellulolyticum).